A 167-amino-acid chain; its full sequence is I-Kappa-B like protein I1 (167 aa).

ANK repeat units lie at residues 54–86 (HGKQ…DING), 91–121 (FGNT…NMGI), and 125–154 (LFKT…QCRI).

The protein belongs to the polydnaviridae I-Kappa-B-like protein family.

Its function is as follows. Suppresses the host immune response through NF-kappa-B inactivation. Possesses ankyrin repeat domains required for NF-kappa-B binding but lacks the regulatory regions required for dissociation from NF-kappa-B and degradation. Therefore, prevents host NF-kappa-B release and subsequent activation. The sequence is that of I-Kappa-B like protein I1 (I1) from Microplitis demolitor (Parasitoid wasp).